Reading from the N-terminus, the 599-residue chain is Adenine deaminase (599 aa).

The protein belongs to the metallo-dependent hydrolases superfamily. Adenine deaminase family. Mn(2+) is required as a cofactor.

The catalysed reaction is adenine + H2O + H(+) = hypoxanthine + NH4(+). This chain is Adenine deaminase, found in Clostridium botulinum (strain ATCC 19397 / Type A).